The primary structure comprises 84 residues: Sulfur carrier protein TusA (84 aa).

The active-site Cysteine persulfide intermediate is the Cys-19.

This sequence belongs to the sulfur carrier protein TusA family. Interacts with IscS.

Its subcellular location is the cytoplasm. Its pathway is tRNA modification. Its function is as follows. Sulfur carrier protein involved in sulfur trafficking in the cell. Part of a sulfur-relay system required for 2-thiolation during synthesis of 2-thiouridine of the modified wobble base 5-methylaminomethyl-2-thiouridine (mnm(5)s(2)U) in tRNA. Interacts with IscS and stimulates its cysteine desulfurase activity. Accepts an activated sulfur from IscS, which is then transferred to TusD, and thus determines the direction of sulfur flow from IscS to 2-thiouridine formation. Also appears to be involved in sulfur transfer for the biosynthesis of molybdopterin. The protein is Sulfur carrier protein TusA of Proteus mirabilis (strain HI4320).